Reading from the N-terminus, the 35-residue chain is Photosystem II reaction center protein M (35 aa).

A helical transmembrane segment spans residues 7–27; the sequence is GFIATILFVLVPTVFLLILYI.

It belongs to the PsbM family. PSII is composed of 1 copy each of membrane proteins PsbA, PsbB, PsbC, PsbD, PsbE, PsbF, PsbH, PsbI, PsbJ, PsbK, PsbL, PsbM, PsbT, PsbX, PsbY, PsbZ, Psb30/Ycf12, peripheral proteins PsbO, CyanoQ (PsbQ), PsbU, PsbV and a large number of cofactors. It forms dimeric complexes.

Its subcellular location is the cellular thylakoid membrane. Its function is as follows. One of the components of the core complex of photosystem II (PSII). PSII is a light-driven water:plastoquinone oxidoreductase that uses light energy to abstract electrons from H(2)O, generating O(2) and a proton gradient subsequently used for ATP formation. It consists of a core antenna complex that captures photons, and an electron transfer chain that converts photonic excitation into a charge separation. This subunit is found at the monomer-monomer interface. The chain is Photosystem II reaction center protein M from Crocosphaera subtropica (strain ATCC 51142 / BH68) (Cyanothece sp. (strain ATCC 51142)).